Reading from the N-terminus, the 367-residue chain is Glutamate 5-kinase (367 aa).

An ATP-binding site is contributed by Lys-10. Positions 137 and 149 each coordinate substrate. ATP-binding positions include 169-170 (TD) and 211-217 (TGGMATK). The PUA domain occupies 275–353 (AGEITVDDGA…QQISEILGYE (79 aa)).

Belongs to the glutamate 5-kinase family.

The protein localises to the cytoplasm. It carries out the reaction L-glutamate + ATP = L-glutamyl 5-phosphate + ADP. Its pathway is amino-acid biosynthesis; L-proline biosynthesis; L-glutamate 5-semialdehyde from L-glutamate: step 1/2. In terms of biological role, catalyzes the transfer of a phosphate group to glutamate to form L-glutamate 5-phosphate. The chain is Glutamate 5-kinase from Yersinia pestis bv. Antiqua (strain Antiqua).